Reading from the N-terminus, the 230-residue chain is Leucyl/phenylalanyl-tRNA--protein transferase (230 aa).

This sequence belongs to the L/F-transferase family.

The protein resides in the cytoplasm. It carries out the reaction N-terminal L-lysyl-[protein] + L-leucyl-tRNA(Leu) = N-terminal L-leucyl-L-lysyl-[protein] + tRNA(Leu) + H(+). The catalysed reaction is N-terminal L-arginyl-[protein] + L-leucyl-tRNA(Leu) = N-terminal L-leucyl-L-arginyl-[protein] + tRNA(Leu) + H(+). It catalyses the reaction L-phenylalanyl-tRNA(Phe) + an N-terminal L-alpha-aminoacyl-[protein] = an N-terminal L-phenylalanyl-L-alpha-aminoacyl-[protein] + tRNA(Phe). Functionally, functions in the N-end rule pathway of protein degradation where it conjugates Leu, Phe and, less efficiently, Met from aminoacyl-tRNAs to the N-termini of proteins containing an N-terminal arginine or lysine. The sequence is that of Leucyl/phenylalanyl-tRNA--protein transferase from Proteus mirabilis (strain HI4320).